We begin with the raw amino-acid sequence, 121 residues long: MQARAVRRHIRSSPLKMRRVINLVRDRSVPEAVAILDYMPQKVTGVVEKTIRSAVYNLMDQHDERFDEGALKLKEIRADEGPTFQRHQARARGRAAPIRKRTTHLKVVVAVEEEAPEEAAA.

Belongs to the universal ribosomal protein uL22 family. Part of the 50S ribosomal subunit.

Its function is as follows. This protein binds specifically to 23S rRNA; its binding is stimulated by other ribosomal proteins, e.g. L4, L17, and L20. It is important during the early stages of 50S assembly. It makes multiple contacts with different domains of the 23S rRNA in the assembled 50S subunit and ribosome. In terms of biological role, the globular domain of the protein is located near the polypeptide exit tunnel on the outside of the subunit, while an extended beta-hairpin is found that lines the wall of the exit tunnel in the center of the 70S ribosome. In Salinibacter ruber (strain DSM 13855 / M31), this protein is Large ribosomal subunit protein uL22.